Here is a 231-residue protein sequence, read N- to C-terminus: Aldehyde decarbonylase (231 aa).

Glu32, Glu60, His63, Glu115, and His147 together coordinate Fe cation.

The protein belongs to the aldehyde decarbonylase family. It depends on Binds 2 metal cations per subunit. The catalytic dinuclear metal-binding site could be either a di-iron or a manganese-iron cofactor. as a cofactor.

It carries out the reaction a long-chain fatty aldehyde + 2 NADPH + O2 + H(+) = a long-chain alkane + formate + 2 NADP(+) + H2O. Its function is as follows. Catalyzes the decarbonylation of fatty aldehydes to alkanes. Requires the presence of ferredoxin, ferredoxin reductase and NADPH for in vitro decarbonylase activity. Involved in the biosynthesis of alkanes, mainly heptadecane and pentadecane. The sequence is that of Aldehyde decarbonylase from Synechococcus elongatus (strain ATCC 33912 / PCC 7942 / FACHB-805) (Anacystis nidulans R2).